A 67-amino-acid polypeptide reads, in one-letter code: DNA-directed RNA polymerase subunit omega (67 aa).

The protein belongs to the RNA polymerase subunit omega family. As to quaternary structure, the RNAP catalytic core consists of 2 alpha, 1 beta, 1 beta' and 1 omega subunit. When a sigma factor is associated with the core the holoenzyme is formed, which can initiate transcription.

It carries out the reaction RNA(n) + a ribonucleoside 5'-triphosphate = RNA(n+1) + diphosphate. Functionally, promotes RNA polymerase assembly. Latches the N- and C-terminal regions of the beta' subunit thereby facilitating its interaction with the beta and alpha subunits. In Polaromonas sp. (strain JS666 / ATCC BAA-500), this protein is DNA-directed RNA polymerase subunit omega.